The sequence spans 63 residues: Protein virE1 (63 aa).

Forms heterodimers with virE2 that prevent virE2 anarchic homopolymerization and binding to DNA.

Involved in DNA transformation; controls virE2 polymerization and prevents virE2 binding to DNA. The protein is Protein virE1 (virE1) of Agrobacterium fabrum (strain C58 / ATCC 33970) (Agrobacterium tumefaciens (strain C58)).